Consider the following 203-residue polypeptide: Recombination protein RecR (203 aa).

A C4-type zinc finger spans residues 56-71; the sequence is CAVCGNVSDEERCRIC. The 101-residue stretch at 79–179 folds into the Toprim domain; sequence SLICVVEEPK…TVTRIASGLP (101 aa).

Belongs to the RecR family.

May play a role in DNA repair. It seems to be involved in an RecBC-independent recombinational process of DNA repair. It may act with RecF and RecO. The protein is Recombination protein RecR of Mycolicibacterium vanbaalenii (strain DSM 7251 / JCM 13017 / BCRC 16820 / KCTC 9966 / NRRL B-24157 / PYR-1) (Mycobacterium vanbaalenii).